The sequence spans 147 residues: Membrane-spanning 4-domains subfamily A member 6E (147 aa).

The Cytoplasmic portion of the chain corresponds to 1 to 52 (MTSQPISNETIIMLPSNVINFSQAEKPEPTNQGQDSLKKRLQAKVKVIGVHS). A helical transmembrane segment spans residues 53 to 73 (SLAGSILSALSALVGFILLSV). Residues 74–120 (NPAALNPASLQCKLDEKDIPTRLLLSYDYHSPYTMDCHRAKASLAGT) are Extracellular-facing. Residues 121–141 (LSLMLVSTVLEFCLAVLTAVL) traverse the membrane as a helical segment. Residues 142–147 (QWKQTV) lie on the Cytoplasmic side of the membrane.

Belongs to the MS4A family. Expressed by malignant and fetal tissue at very low levels.

Its subcellular location is the membrane. May be involved in signal transduction as a component of a multimeric receptor complex. The sequence is that of Membrane-spanning 4-domains subfamily A member 6E (MS4A6E) from Homo sapiens (Human).